A 315-amino-acid polypeptide reads, in one-letter code: Putative pyruvate, phosphate dikinase regulatory protein (315 aa).

A disordered region spans residues 1–32 (MGPFGARASPEAGQVVKQPLTDDPQESLAQGE). 189 to 196 (GVSRTSKT) contacts ADP.

This sequence belongs to the pyruvate, phosphate/water dikinase regulatory protein family. PDRP subfamily.

The catalysed reaction is N(tele)-phospho-L-histidyl/L-threonyl-[pyruvate, phosphate dikinase] + ADP = N(tele)-phospho-L-histidyl/O-phospho-L-threonyl-[pyruvate, phosphate dikinase] + AMP + H(+). It catalyses the reaction N(tele)-phospho-L-histidyl/O-phospho-L-threonyl-[pyruvate, phosphate dikinase] + phosphate + H(+) = N(tele)-phospho-L-histidyl/L-threonyl-[pyruvate, phosphate dikinase] + diphosphate. Bifunctional serine/threonine kinase and phosphorylase involved in the regulation of the pyruvate, phosphate dikinase (PPDK) by catalyzing its phosphorylation/dephosphorylation. The sequence is that of Putative pyruvate, phosphate dikinase regulatory protein from Caulobacter vibrioides (strain ATCC 19089 / CIP 103742 / CB 15) (Caulobacter crescentus).